Reading from the N-terminus, the 223-residue chain is MLYRSISCPKGTFFMTTPPAAAEIFGDNLEKAIAYHESLATDGSVRGFIGPREVPRLWDRHILNCGVIGEAMDEGISVADIGSGAGLPGIPLAIARPDLNITLIEPLLKRSVYLNEVKEALNLDNVTVVRGRAEEKVVRKQVGLVDIVTSRAVAPLGKLATWSLPLVKIGGRMVAMKGSSVEEEIERDAKEIRKAGGTDIKVYTVGEALLSEPTTLISIRREK.

S-adenosyl-L-methionine is bound by residues Gly-82, Leu-87, 133-134 (AE), and Arg-151.

It belongs to the methyltransferase superfamily. RNA methyltransferase RsmG family.

It localises to the cytoplasm. Its function is as follows. Specifically methylates the N7 position of guanine in position 518 of 16S rRNA. In Corynebacterium glutamicum (strain ATCC 13032 / DSM 20300 / JCM 1318 / BCRC 11384 / CCUG 27702 / LMG 3730 / NBRC 12168 / NCIMB 10025 / NRRL B-2784 / 534), this protein is Ribosomal RNA small subunit methyltransferase G.